The following is a 323-amino-acid chain: Delta(7)-sterol 5(6)-desaturase ERG3B (323 aa).

The next 3 helical transmembrane spans lie at 67 to 87 (ASIL…SAAL), 112 to 132 (IQSS…FFLG), and 150 to 170 (SWLA…IYWI). The 129-residue stretch at 157–285 (ILYMVFNDLG…YFTWADNYWG (129 aa)) folds into the Fatty acid hydroxylase domain. Residues 171-175 (HRLEH) carry the Histidine box-1 motif. Residues 184-188 (HKPHH) carry the Histidine box-2 motif. The Histidine box-3 motif lies at 262 to 266 (HTLHH).

The protein belongs to the sterol desaturase family.

It localises to the endoplasmic reticulum membrane. The enzyme catalyses episterol + 2 Fe(II)-[cytochrome b5] + O2 + 2 H(+) = 5-dehydroepisterol + 2 Fe(III)-[cytochrome b5] + 2 H2O. The protein operates within steroid metabolism; ergosterol biosynthesis. In terms of biological role, C-5 sterol desaturase; part of the third module of ergosterol biosynthesis pathway that includes the late steps of the pathway. ERG3A and ERG3BB catalyze the introduction of a C-5 double bond in the B ring to produce 5-dehydroepisterol. The third module or late pathway involves the ergosterol synthesis itself through consecutive reactions that mainly occur in the endoplasmic reticulum (ER) membrane. Firstly, the squalene synthase ERG9 catalyzes the condensation of 2 farnesyl pyrophosphate moieties to form squalene, which is the precursor of all steroids. Squalene synthase is crucial for balancing the incorporation of farnesyl diphosphate (FPP) into sterol and nonsterol isoprene synthesis. Secondly, squalene is converted into lanosterol by the consecutive action of the squalene epoxidase ERG1 and the lanosterol synthase ERG7. Then, the delta(24)-sterol C-methyltransferase ERG6 methylates lanosterol at C-24 to produce eburicol. Eburicol is the substrate of the sterol 14-alpha demethylase encoded by CYP51A, CYP51B and CYP51C, to yield 4,4,24-trimethyl ergosta-8,14,24(28)-trienol. CYP51B encodes the enzyme primarily responsible for sterol 14-alpha-demethylation, and plays an essential role in ascospore formation. CYP51A encodes an additional sterol 14-alpha-demethylase, induced on ergosterol depletion and responsible for the intrinsic variation in azole sensitivity. The third CYP51 isoform, CYP51C, does not encode a sterol 14-alpha-demethylase, but is required for full virulence on host wheat ears. The C-14 reductase ERG24 then reduces the C14=C15 double bond which leads to 4,4-dimethylfecosterol. A sequence of further demethylations at C-4, involving the C-4 demethylation complex containing the C-4 methylsterol oxidases ERG25, the sterol-4-alpha-carboxylate 3-dehydrogenase ERG26 and the 3-keto-steroid reductase ERG27, leads to the production of fecosterol via 4-methylfecosterol. ERG28 has a role as a scaffold to help anchor ERG25, ERG26 and ERG27 to the endoplasmic reticulum. The C-8 sterol isomerase ERG2 then catalyzes the reaction which results in unsaturation at C-7 in the B ring of sterols and thus converts fecosterol to episterol. The sterol-C5-desaturases ERG3A and ERG3BB then catalyze the introduction of a C-5 double bond in the B ring to produce 5-dehydroepisterol. The C-22 sterol desaturases ERG5A and ERG5B further convert 5-dehydroepisterol into ergosta-5,7,22,24(28)-tetraen-3beta-ol by forming the C-22(23) double bond in the sterol side chain. Finally, ergosta-5,7,22,24(28)-tetraen-3beta-ol is substrate of the C-24(28) sterol reductase ERG4 to produce ergosterol. In Gibberella zeae (strain ATCC MYA-4620 / CBS 123657 / FGSC 9075 / NRRL 31084 / PH-1) (Wheat head blight fungus), this protein is Delta(7)-sterol 5(6)-desaturase ERG3B.